Reading from the N-terminus, the 142-residue chain is UPF0305 protein MK0666 (142 aa).

This sequence belongs to the UPF0305 family.

In Methanopyrus kandleri (strain AV19 / DSM 6324 / JCM 9639 / NBRC 100938), this protein is UPF0305 protein MK0666.